The primary structure comprises 248 residues: 3-deoxy-manno-octulosonate cytidylyltransferase (248 aa).

The protein belongs to the KdsB family.

The protein resides in the cytoplasm. It catalyses the reaction 3-deoxy-alpha-D-manno-oct-2-ulosonate + CTP = CMP-3-deoxy-beta-D-manno-octulosonate + diphosphate. Its pathway is nucleotide-sugar biosynthesis; CMP-3-deoxy-D-manno-octulosonate biosynthesis; CMP-3-deoxy-D-manno-octulosonate from 3-deoxy-D-manno-octulosonate and CTP: step 1/1. The protein operates within bacterial outer membrane biogenesis; lipopolysaccharide biosynthesis. In terms of biological role, activates KDO (a required 8-carbon sugar) for incorporation into bacterial lipopolysaccharide in Gram-negative bacteria. The polypeptide is 3-deoxy-manno-octulosonate cytidylyltransferase (Klebsiella pneumoniae subsp. pneumoniae (strain ATCC 700721 / MGH 78578)).